A 38-amino-acid chain; its full sequence is Histatin-1 (38 aa).

Residues 1–38 (DSHEERHHGRHGHHKYGRKFHEKHHSHRGYRSNYLYDN) are disordered. Ser-2 carries the phosphoserine modification. The span at 8-30 (HGRHGHHKYGRKFHEKHHSHRGY) shows a compositional bias: basic residues.

This sequence belongs to the histatin/statherin family.

Its subcellular location is the secreted. Its function is as follows. Histatins (Hsts) are cationic and histidine-rich secreted peptides mainly synthesized by saliva glands of humans and higher primates. Hsts are considered to be major precursors of the protective proteinaceous structure on tooth surfaces (enamel pellicle). The sequence is that of Histatin-1 (HTN1) from Macaca fascicularis (Crab-eating macaque).